The following is a 786-amino-acid chain: Spermatogenesis-associated protein 20 (786 aa).

The first 22 residues, 1–22, serve as a signal peptide directing secretion; it reads MLGARAWLGRVLLLPRAGAGLA. The interval 23-61 is disordered; it reads ASRRGSSSRDKDRSATVSSSVPMPAGGKGSHPSSTPQRV. The residue at position 649 (serine 649) is a Phosphoserine.

It is found in the secreted. Its function is as follows. May play a role in fertility regulation. The sequence is that of Spermatogenesis-associated protein 20 (SPATA20) from Homo sapiens (Human).